A 316-amino-acid polypeptide reads, in one-letter code: MANLKDIRDRIVSVKNTRKITEAMRLVAAAKVRRAQDQVLRSRPFADRLARVLENIQSRMQFEAADSPLLNKREVKTITLLAVTGDRGLCGGYNANIIKRTEKRYAELKGQGYSPDLVLIGKKAIGYFENRSSLYKIRATFKELEQVPTSEDAASITSEVLAEFLSESTDRVEVIFTKFVSLVSCNPTIQTLLPLDPQGIADSEDEIFRLTTKDSQLIIEKDAAPSNEEPKLPSDIVFEQSPDQLLNALLPLYLQNQLLRALQESAASELASRMTAMNNASDNAKELAKNLTIDYNKARQAAITQEILEVVGGASA.

Belongs to the ATPase gamma chain family. As to quaternary structure, F-type ATPases have 2 components, CF(1) - the catalytic core - and CF(0) - the membrane proton channel. CF(1) has five subunits: alpha(3), beta(3), gamma(1), delta(1), epsilon(1). CF(0) has three main subunits: a, b and c.

The protein localises to the cellular thylakoid membrane. Its function is as follows. Produces ATP from ADP in the presence of a proton gradient across the membrane. The gamma chain is believed to be important in regulating ATPase activity and the flow of protons through the CF(0) complex. The protein is ATP synthase gamma chain of Prochlorococcus marinus (strain NATL2A).